The chain runs to 528 residues: D-3-phosphoglycerate dehydrogenase (528 aa).

NAD(+)-binding positions include 151 to 152, D171, 230 to 232, and D256; these read RI and AAR. R232 is a catalytic residue. E261 is a catalytic residue. H279 acts as the Proton donor in catalysis. 279–282 provides a ligand contact to NAD(+); the sequence is HLGA. The ACT domain occupies 455–528; that stretch reads NLVIRYVDQP…ANKLEVVNLS (74 aa).

The protein belongs to the D-isomer specific 2-hydroxyacid dehydrogenase family.

It catalyses the reaction (2R)-3-phosphoglycerate + NAD(+) = 3-phosphooxypyruvate + NADH + H(+). The catalysed reaction is (R)-2-hydroxyglutarate + NAD(+) = 2-oxoglutarate + NADH + H(+). It participates in amino-acid biosynthesis; L-serine biosynthesis; L-serine from 3-phospho-D-glycerate: step 1/3. Its function is as follows. Catalyzes the reversible oxidation of 3-phospho-D-glycerate to 3-phosphonooxypyruvate, the first step of the phosphorylated L-serine biosynthesis pathway. Also catalyzes the reversible oxidation of 2-hydroxyglutarate to 2-oxoglutarate. In Mycobacterium leprae (strain TN), this protein is D-3-phosphoglycerate dehydrogenase (serA).